A 141-amino-acid polypeptide reads, in one-letter code: Large ribosomal subunit protein uL16 (141 aa).

The protein belongs to the universal ribosomal protein uL16 family. As to quaternary structure, part of the 50S ribosomal subunit.

Functionally, binds 23S rRNA and is also seen to make contacts with the A and possibly P site tRNAs. The protein is Large ribosomal subunit protein uL16 of Nostoc punctiforme (strain ATCC 29133 / PCC 73102).